A 390-amino-acid polypeptide reads, in one-letter code: uncharacterized protein (390 aa).

This sequence belongs to the arsA ATPase family.

This is an uncharacterized protein from Streptomyces coelicolor (strain ATCC BAA-471 / A3(2) / M145).